A 109-amino-acid chain; its full sequence is MFELKTVALFVVTAIAEIVGCYLPYLWLRQSGSIWLLLPAALSLALFAWLLSLHPEASGRVYAAYGGIYVAVALGWLWLVDGIKPTNWDVAGVVFTFIGMGIIMFAPRA.

A run of 4 helical transmembrane segments spans residues 7 to 27 (VALF…PYLW), 33 to 53 (SIWL…LLSL), 63 to 83 (AAYG…VDGI), and 87 to 107 (NWDV…MFAP).

The protein belongs to the UPF0060 family.

It localises to the cell inner membrane. This Herminiimonas arsenicoxydans protein is UPF0060 membrane protein HEAR0108.